Here is a 544-residue protein sequence, read N- to C-terminus: Chaperonin GroEL 2 (544 aa).

ATP-binding positions include 29–32, 86–90, G413, 479–481, and D495; these read TLGP, DGTTT, and NAA.

This sequence belongs to the chaperonin (HSP60) family. Forms a cylinder of 14 subunits composed of two heptameric rings stacked back-to-back. Interacts with the co-chaperonin GroES.

The protein localises to the cytoplasm. It catalyses the reaction ATP + H2O + a folded polypeptide = ADP + phosphate + an unfolded polypeptide.. In terms of biological role, together with its co-chaperonin GroES, plays an essential role in assisting protein folding. The GroEL-GroES system forms a nano-cage that allows encapsulation of the non-native substrate proteins and provides a physical environment optimized to promote and accelerate protein folding. In Prochlorococcus marinus (strain MIT 9515), this protein is Chaperonin GroEL 2.